A 451-amino-acid chain; its full sequence is Heme sensor protein HssS (451 aa).

2 helical membrane-spanning segments follow: residues Ile-9–Asn-29 and Ile-164–Ser-184. Positions Tyr-186–Gln-238 constitute an HAMP domain. The Histidine kinase domain maps to Asn-246–Ile-451. His-249 carries the post-translational modification Phosphohistidine; by autocatalysis.

Autophosphorylated.

The protein localises to the cell membrane. It catalyses the reaction ATP + protein L-histidine = ADP + protein N-phospho-L-histidine.. Its function is as follows. Member of the two-component regulatory system HssS/HssR involved in intracellular heme homeostasis and tempering of staphylococcal virulence. HssS functions as a heme sensor histidine kinase which is autophosphorylated at a histidine residue and transfers its phosphate group to an aspartate residue of HssR. HssR/HssS activates the expression of HrtAB, an efflux pump, in response to extracellular heme, hemin, hemoglobin or blood. The polypeptide is Heme sensor protein HssS (hssS) (Staphylococcus epidermidis (strain ATCC 12228 / FDA PCI 1200)).